The primary structure comprises 119 residues: Large ribosomal subunit protein uL18 (119 aa).

Residues 1–25 (MITKIDKNKVRKKRHARVRSKISGT) form a disordered region. The span at 9-20 (KVRKKRHARVRS) shows a compositional bias: basic residues.

The protein belongs to the universal ribosomal protein uL18 family. Part of the 50S ribosomal subunit; part of the 5S rRNA/L5/L18/L25 subcomplex. Contacts the 5S and 23S rRNAs.

In terms of biological role, this is one of the proteins that bind and probably mediate the attachment of the 5S RNA into the large ribosomal subunit, where it forms part of the central protuberance. The protein is Large ribosomal subunit protein uL18 of Listeria monocytogenes serotype 4b (strain CLIP80459).